A 274-amino-acid polypeptide reads, in one-letter code: Remorin 4.2 (274 aa).

Residues 1 to 30 (MLTLYHQERSPDATSNDRDETPETVVREVH) show a composition bias toward basic and acidic residues. 3 disordered regions span residues 1–71 (MLTL…EGEN), 117–157 (TDHE…TVQR), and 218–245 (AMEK…AKRG). Polar residues-rich tracts occupy residues 61 to 71 (RSATTMSEGEN) and 145 to 156 (GPGQSRVGSTVQ). Residues 204-239 (MKKIERKLEERKAKAMEKTQNNVAKAQRKAEERRAT) are a coiled coil. Residues 231–245 (RKAEERRATAEAKRG) are compositionally biased toward basic and acidic residues.

The protein belongs to the remorin family. As to quaternary structure, forms homodimer and heterodimer with REM4.1. Interacts with KIN11. Post-translationally, probably ubiquitinated and degraded by the 26S proteasome pathway. In terms of tissue distribution, predominantly detected in bud, stem, root, flower, silique, and leaves, and enhanced dramatically in senescence leaf.

It localises to the cell membrane. Functionally, collaborates with REM4.1 to positively regulate the BCTV and BSCTV susceptibility. The polypeptide is Remorin 4.2 (Arabidopsis thaliana (Mouse-ear cress)).